We begin with the raw amino-acid sequence, 193 residues long: Superoxide dismutase [Fe] (193 aa).

The Fe cation site is built by His-27, His-74, Asp-157, and His-161.

The protein belongs to the iron/manganese superoxide dismutase family. In terms of assembly, homodimer. It depends on Fe cation as a cofactor.

The enzyme catalyses 2 superoxide + 2 H(+) = H2O2 + O2. In terms of biological role, destroys superoxide anion radicals which are normally produced within the cells and which are toxic to biological systems. Partially complements double sodA-sodB deletions in E.coli. This Pseudomonas aeruginosa (strain ATCC 15692 / DSM 22644 / CIP 104116 / JCM 14847 / LMG 12228 / 1C / PRS 101 / PAO1) protein is Superoxide dismutase [Fe].